The following is a 397-amino-acid chain: Mannan endo-1,4-beta-mannosidase 1 (397 aa).

An N-terminal signal peptide occupies residues 1–23 (MSYARRSCICGLFLLFLALVCEA). Residues W83 and N198 each contribute to the substrate site. Residue E199 is the Proton donor of the active site. Y276 contacts substrate. The active-site Nucleophile is E316. W354 contacts substrate.

It belongs to the glycosyl hydrolase 5 (cellulase A) family.

The protein localises to the secreted. The catalysed reaction is Random hydrolysis of (1-&gt;4)-beta-D-mannosidic linkages in mannans, galactomannans and glucomannans.. This chain is Mannan endo-1,4-beta-mannosidase 1 (MAN1), found in Solanum lycopersicum (Tomato).